The sequence spans 96 residues: Co-chaperonin GroES (96 aa).

Belongs to the GroES chaperonin family. Heptamer of 7 subunits arranged in a ring. Interacts with the chaperonin GroEL.

The protein localises to the cytoplasm. In terms of biological role, together with the chaperonin GroEL, plays an essential role in assisting protein folding. The GroEL-GroES system forms a nano-cage that allows encapsulation of the non-native substrate proteins and provides a physical environment optimized to promote and accelerate protein folding. GroES binds to the apical surface of the GroEL ring, thereby capping the opening of the GroEL channel. This Actinobacillus pleuropneumoniae serotype 5b (strain L20) protein is Co-chaperonin GroES.